Reading from the N-terminus, the 317-residue chain is MWLYLAVFVGLYYLLHWYRERQVLSHLRDKYVFITGCDSGFGKLLARQLDARGLRVLAACLTEKGAEQLRGQTSDRLETVTLDVTKTESVAAAAQWVKECVRDKGLWGLVNNAGISLPTAPNELLTKQDFVTILDVNLLGVIDVTLSLLPLVRRARGRVVNVSSVMGRVSLFGGGYCISKYGVEAFSDSLRRELSYFGVKVAMIEPGYFKTAVTSKERFLKSFLEIWDRSSPEVKEAYGEKFVADYKKSAEQMEQKCTQDLSLVTNCMEHALIACHPRTRYSAGWDAKLLYLPMSYMPTFLVDAIMYWVSPSPAKAL.

Position 33-57 (33-57 (FITGCDSGFGKLLARQLDARGLRVL)) interacts with NAD(+). A substrate-binding site is contributed by serine 164. Tyrosine 176 functions as the Proton acceptor in the catalytic mechanism. A helical membrane pass occupies residues 289–309 (LLYLPMSYMPTFLVDAIMYWV).

The protein belongs to the short-chain dehydrogenases/reductases (SDR) family. Homodimer. Not N-glycosylated. As to expression, highly expressed in adult liver (at protein level). Detected in endometrium, liver and foreskin. Detected in the spineous layers of adult skin, and at lower levels in basal and granular skin layers. Detected in fetal liver and lung.

It is found in the microsome membrane. Its subcellular location is the endoplasmic reticulum membrane. It carries out the reaction all-trans-retinol--[retinol-binding protein] + NAD(+) = all-trans-retinal--[retinol-binding protein] + NADH + H(+). The enzyme catalyses all-trans-retinol + NAD(+) = all-trans-retinal + NADH + H(+). The catalysed reaction is 13-cis-retinol + NAD(+) = 13-cis-retinal + NADH + H(+). It catalyses the reaction 11-cis-retinol + NAD(+) = 11-cis-retinal + NADH + H(+). It carries out the reaction 9-cis-retinol + NAD(+) = 9-cis-retinal + NADH + H(+). The enzyme catalyses 5alpha-androstane-3alpha,17beta-diol + NAD(+) = 17beta-hydroxy-5alpha-androstan-3-one + NADH + H(+). The catalysed reaction is androsterone + NAD(+) = 5alpha-androstan-3,17-dione + NADH + H(+). Its pathway is cofactor metabolism; retinol metabolism. Its activity is regulated as follows. Inhibited by citral, perillyl alcohol, geraniol, farnesol and geranyl geraniol. Oxidoreductase with a preference for NAD. Oxidizes all-trans-retinol, 9-cis-retinol, 11-cis-retinol and 13-cis-retinol to the corresponding aldehydes. Has higher activity towards CRBP-bound retinol than with free retinol. Also oxidizes 3-alpha-hydroxysteroids. Oxidizes androstanediol and androsterone to dihydrotestosterone and androstanedione. Can also catalyze the reverse reaction. This chain is Retinol dehydrogenase 16, found in Homo sapiens (Human).